Consider the following 146-residue polypeptide: Large ribosomal subunit protein uL15 (146 aa).

Positions 1–54 (MKLHELQPAAGSRKAPKRVGRGTGSGLGRNAGKGEKGQNARSGGGVRPGFEGGQ) are disordered. 2 stretches are compositionally biased toward gly residues: residues 21-31 (RGTGSGLGRNA) and 42-52 (SGGGVRPGFEG).

This sequence belongs to the universal ribosomal protein uL15 family. As to quaternary structure, part of the 50S ribosomal subunit.

Binds to the 23S rRNA. This chain is Large ribosomal subunit protein uL15, found in Clostridium botulinum (strain Alaska E43 / Type E3).